A 316-amino-acid chain; its full sequence is NAC domain-containing protein 2 (316 aa).

Positions 17 to 170 (LPPGFRFHPT…DWVLCRLYNK (154 aa)) constitute an NAC domain. A DNA-binding region spans residues 114–176 (LGIKKALVFY…LYNKKNEWEK (63 aa)). Residues 185-210 (EEASDMVTSQSHSHTHSWGETRTPES) form a disordered region. Residues 190-200 (MVTSQSHSHTH) show a composition bias toward polar residues.

As to quaternary structure, forms homodimer. Interacts with NAC071. Expressed in roots and stamens.

It localises to the nucleus. Transcription factor that possesses transactivation activity. Transcription activator involved in response to abiotic stresses. Plays a positive role during dehydration and salt stress. Binds specifically to the 5'-CATGTG-3' motif found in promoters of stress-responsive genes. In Oryza sativa subsp. japonica (Rice), this protein is NAC domain-containing protein 2.